A 59-amino-acid chain; its full sequence is MDHRLLEIVACPVCKGKLTYDKDRQELICKLDRLAYPIKEGIPVLLEPEARSMSMDEGR.

It belongs to the UPF0434 family.

This chain is UPF0434 protein VC_1876, found in Vibrio cholerae serotype O1 (strain ATCC 39315 / El Tor Inaba N16961).